A 730-amino-acid chain; its full sequence is Wall-associated receptor kinase-like 1 (730 aa).

Residues 1–25 (MKTKTSIFQFIVASVLTLLINDSSA) form the signal peptide. The Extracellular segment spans residues 26 to 358 (ATPPPPISNS…KPTKPPVLQG (333 aa)). N34, N40, N70, N77, N92, N119, N132, N211, N233, N269, and N281 each carry an N-linked (GlcNAc...) asparagine glycan. An atypical EGF-like region spans residues 282–341 (CSCEYDYFSGMSYRNCYCDYGYTGNPYLRGGCVDTDSCEGNHNCGEDAHCVNMPGPMSMC). Cystine bridges form between C284–C297, C319–C331, and C325–C341. A helical membrane pass occupies residues 359-379 (ILIGLSGLVFFVGLFWLFKLI). Residues 380–730 (KKRRNINRSK…DQPMAINNKR (351 aa)) lie on the Cytoplasmic side of the membrane. A Protein kinase domain is found at 429–702 (FSIDRVLGQG…KEVSNELERI (274 aa)). ATP contacts are provided by residues 435 to 443 (LGQGGQGTV) and K457. Position 502 is a phosphotyrosine (Y502). The active-site Proton acceptor is the D554. T588 and T593 each carry phosphothreonine. Y601 carries the phosphotyrosine modification. A disordered region spans residues 685-730 (KGKNRPNMKEVSNELERIRSSPEDLDVRTENEDEEEDQPMAINNKR). A compositionally biased stretch (basic and acidic residues) spans 691 to 714 (NMKEVSNELERIRSSPEDLDVRTE).

This sequence belongs to the protein kinase superfamily. Ser/Thr protein kinase family. In terms of tissue distribution, preferentially expressed in roots and flowers.

It localises to the membrane. It catalyses the reaction L-seryl-[protein] + ATP = O-phospho-L-seryl-[protein] + ADP + H(+). It carries out the reaction L-threonyl-[protein] + ATP = O-phospho-L-threonyl-[protein] + ADP + H(+). In terms of biological role, serine/threonine-protein kinase that may function as a signaling receptor of extracellular matrix component. The polypeptide is Wall-associated receptor kinase-like 1 (WAKL1) (Arabidopsis thaliana (Mouse-ear cress)).